The following is a 552-amino-acid chain: Gamma-aminobutyric acid receptor subunit alpha-4 (552 aa).

The signal sequence occupies residues 1–35 (MVSVQKVPAIALCSGVSLALLHFLCLAACLNESPG). Residues 36-259 (QNSKDEKLCP…FHLRRKMGYF (224 aa)) lie on the Extracellular side of the membrane. N-linked (GlcNAc...) asparagine glycosylation occurs at Asn-47. Arg-100 is a 4-aminobutanoate binding site. N-linked (GlcNAc...) asparagine glycans are attached at residues Asn-144 and Asn-157. Thr-163 serves as a coordination point for 4-aminobutanoate. Cys-172 and Cys-186 form a disulfide bridge. A helical membrane pass occupies residues 260–280 (MIQTYIPCIMTVILSQVSFWI). The Cytoplasmic portion of the chain corresponds to 281–284 (NKES). Residues 285 to 305 (VPARTVFGITTVLTMTTLSIS) form a helical membrane-spanning segment. Topologically, residues 306–318 (ARHSLPKVSYATA) are extracellular. A helical membrane pass occupies residues 319 to 341 (MDWFIAVCFAFVFSALIEFAAVN). Topologically, residues 342-515 (YFTNIQMQKA…PPPSGSGTSK (174 aa)) are cytoplasmic. Disordered regions lie at residues 353 to 480 (KKIS…FGSR) and 492 to 513 (GAAGNVSATPPPPAPPPSGSGT). The span at 396 to 406 (SESDVKSRTEV) shows a compositional bias: basic and acidic residues. The segment covering 407–422 (GNHSSKTSAVQESSEA) has biased composition (polar residues). Positions 445–458 (SAAARGLSSAASPS) are enriched in low complexity. Residues 500 to 509 (TPPPPAPPPS) are compositionally biased toward pro residues. Residues 516 to 538 (IDKYARILFPVTFGAFNMVYWVV) traverse the membrane as a helical segment. The Extracellular segment spans residues 539–552 (YLSKDTMEKSESLM).

The protein belongs to the ligand-gated ion channel (TC 1.A.9) family. Gamma-aminobutyric acid receptor (TC 1.A.9.5) subfamily. GABRA4 sub-subfamily. As to quaternary structure, heteropentamer, formed by a combination of alpha (GABRA1-6), beta (GABRB1-3), gamma (GABRG1-3), delta (GABRD), epsilon (GABRE), rho (GABRR1-3), pi (GABRP) and theta (GABRQ) chains, each subunit exhibiting distinct physiological and pharmacological properties. As to expression, expressed in the brain.

It is found in the cell membrane. Its subcellular location is the postsynaptic cell membrane. The enzyme catalyses chloride(in) = chloride(out). Potentiated by gaboxadol. Potentiated by histamine. Its function is as follows. Alpha subunit of the heteropentameric ligand-gated chloride channel gated by gamma-aminobutyric acid (GABA), a major inhibitory neurotransmitter in the brain. GABA-gated chloride channels, also named GABA(A) receptors (GABAAR), consist of five subunits arranged around a central pore and contain GABA active binding site(s) located at the alpha and beta subunit interface(s). Alpha-4/GABRA4 subunit often assembles with delta or gamma-2 subunits, in combination with beta subunits. When activated by GABA, GABAARs selectively allow the flow of chloride anions across the cell membrane down their electrochemical gradient. GABAARs containing alpha-4 are predominantly extrasynaptic, contributing to tonic inhibition in dentate granule cells and thalamic relay neurons. Extrasynaptic alpha-4-containing GABAARs control levels of excitability and network activity. GABAAR containing alpha-4-beta-3-delta subunits can simultaneously bind GABA and histamine where histamine binds at the interface of two neighboring beta subunits, which may be involved in the regulation of sleep and wakefulness. The polypeptide is Gamma-aminobutyric acid receptor subunit alpha-4 (Mus musculus (Mouse)).